We begin with the raw amino-acid sequence, 551 residues long: BAG family molecular chaperone regulator 8, chloroplastic (551 aa).

The span at 1–19 (MASHHHHNHNHVCSRHQNH) shows a compositional bias: basic residues. A disordered region spans residues 1-46 (MASHHHHNHNHVCSRHQNHHNNTPQFATSPNCCNKSNHPSPPPAED). The N-terminal 52 residues, 1–52 (MASHHHHNHNHVCSRHQNHHNNTPQFATSPNCCNKSNHPSPPPAEDNLLHLV), are a transit peptide targeting the chloroplast. Residues 20-38 (HNNTPQFATSPNCCNKSNH) show a composition bias toward polar residues. The IQ domain maps to 131 to 160 (RDSAARVIQTHFRSYLVHRSISFRQLKELA). Positions 147 to 228 (VHRSISFRQL…RFVQYVDDCV (82 aa)) constitute a BAG domain. A disordered region spans residues 246–281 (GKKPQGFGTSSEDEDNNADMSDDSEEVPVSSIDKRK). Over residues 256–271 (SEDEDNNADMSDDSEE) the composition is skewed to acidic residues. Serine 332 carries the post-translational modification Phosphoserine. Disordered stretches follow at residues 414 to 433 (DEGK…KGSG) and 450 to 551 (NVYK…KMEP). Basic and acidic residues predominate over residues 479-499 (GEEKGNVNEVEEIKYVPKENE). The segment covering 500 to 513 (SFEEEEEKETDSEN) has biased composition (acidic residues). The span at 522–534 (EGDKRVTKKEVQH) shows a compositional bias: basic and acidic residues.

Binds to the ATPase domain of HSP70/HSC70 chaperones.

It is found in the plastid. Its subcellular location is the chloroplast. Co-chaperone that regulates diverse cellular pathways, such as programmed cell death and stress responses. The sequence is that of BAG family molecular chaperone regulator 8, chloroplastic (BAG1) from Arabidopsis thaliana (Mouse-ear cress).